Here is a 206-residue protein sequence, read N- to C-terminus: Small ribosomal subunit protein uS4 (206 aa).

In terms of domain architecture, S4 RNA-binding spans 96–156 (GRLDNVVYRM…EKAKKQSRVK (61 aa)).

Belongs to the universal ribosomal protein uS4 family. As to quaternary structure, part of the 30S ribosomal subunit. Contacts protein S5. The interaction surface between S4 and S5 is involved in control of translational fidelity.

Its function is as follows. One of the primary rRNA binding proteins, it binds directly to 16S rRNA where it nucleates assembly of the body of the 30S subunit. In terms of biological role, with S5 and S12 plays an important role in translational accuracy. The protein is Small ribosomal subunit protein uS4 of Yersinia enterocolitica serotype O:8 / biotype 1B (strain NCTC 13174 / 8081).